The primary structure comprises 625 residues: MQNTAKKATLPATALAALGVVFGDIGTSPLYALKESFHAAHGLGIQPENVLGILSIIFWCLMLIISIKYVAIVMRADNNGEGGIMALLALNLRKAKIADNKKIYMIAIGFIGASLFFGDGIITPAISVLSAVEGLSIATDVFDPFIMPIAIAIIVTLFLVQKHGPAFVGKFFGPITLVWFLSLGILGIHSVIQTPVVLGMFSPHWAIQFIYHHPIMTFFVMGAVVLTVTGGEALYADMGHFGPVPIRLAWFFVVLPCLVLNYAGQGALLLRDPAAIENPFYLLVPQWALYPMIIMATMATVIASQAVISGVFSLARQAIQLGYLPRLSIKHTSESEEGQIYVPFLNWLLLIAIIILILIFKTSSNLASAYGLAVTLTMLCDTILVAVFIYSAWKWSLPKVLILIIPFFILESVLVGATSLKILSGGWVPLLIGAIAVTILMTWKRGRELTFAKLEHDTLSLDLFVKSIGNSVHWVPGDAVFMTGTPNVVPHAMLHNIKHNKVLHQRNILVTVVIEDVPFVAPEERITTETLAEHFFRIKIFYGFKDEMNVPKALMQAYEQLGLEYDLMHISFFISRDRIVHSVGDGMSPWREKLFISMQRNTSPVSDFYQIPTNRVVELGSQIEI.

Helical transmembrane passes span 13 to 33 (TALAALGVVFGDIGTSPLYAL), 53 to 73 (ILSIIFWCLMLIISIKYVAIV), 103 to 123 (IYMIAIGFIGASLFFGDGIIT), 141 to 161 (VFDPFIMPIAIAIIVTLFLVQ), 172 to 192 (FGPITLVWFLSLGILGIHSVI), 206 to 226 (AIQFIYHHPIMTFFVMGAVVL), 250 to 270 (WFFVVLPCLVLNYAGQGALLL), 282 to 302 (LLVPQWALYPMIIMATMATVI), 340 to 360 (IYVPFLNWLLLIAIIILILIF), 369 to 389 (AYGLAVTLTMLCDTILVAVFI), 400 to 420 (VLILIIPFFILESVLVGATSL), and 422 to 442 (ILSGGWVPLLIGAIAVTILMT).

This sequence belongs to the HAK/KUP transporter (TC 2.A.72) family.

Its subcellular location is the cell inner membrane. The enzyme catalyses K(+)(in) + H(+)(in) = K(+)(out) + H(+)(out). In terms of biological role, transport of potassium into the cell. Likely operates as a K(+):H(+) symporter. This Acinetobacter baumannii (strain SDF) protein is Probable potassium transport system protein Kup.